The primary structure comprises 431 residues: Maintenance of mitochondrial morphology protein 1 (431 aa).

Topologically, residues Met-1–Gly-103 are lumenal. A helical membrane pass occupies residues Leu-104–Phe-124. Residues Thr-125–Ser-431 are Cytoplasmic-facing. The 213-residue stretch at Ser-192–Pro-404 folds into the SMP-LTD domain. A disordered region spans residues Asn-412 to Ser-431.

This sequence belongs to the MMM1 family. Homodimer. Component of the ER-mitochondria encounter structure (ERMES) or MDM complex, composed of MMM1, MDM10, MDM12 and MDM34. An MMM1 homodimer associates with one molecule of MDM12 on each side in a pairwise head-to-tail manner, and the SMP-LTD domains of MMM1 and MDM12 generate a continuous hydrophobic tunnel for phospholipid trafficking.

The protein localises to the endoplasmic reticulum membrane. Component of the ERMES/MDM complex, which serves as a molecular tether to connect the endoplasmic reticulum (ER) and mitochondria. Components of this complex are involved in the control of mitochondrial shape and protein biogenesis, and function in nonvesicular lipid trafficking between the ER and mitochondria. The MDM12-MMM1 subcomplex functions in the major beta-barrel assembly pathway that is responsible for biogenesis of all outer membrane beta-barrel proteins, and acts in a late step after the SAM complex. The MDM10-MDM12-MMM1 subcomplex further acts in the TOM40-specific pathway after the action of the MDM12-MMM1 complex. Essential for establishing and maintaining the structure of mitochondria and maintenance of mtDNA nucleoids. This Candida glabrata (strain ATCC 2001 / BCRC 20586 / JCM 3761 / NBRC 0622 / NRRL Y-65 / CBS 138) (Yeast) protein is Maintenance of mitochondrial morphology protein 1.